Consider the following 201-residue polypeptide: Ribosomal RNA large subunit methyltransferase E (201 aa).

S-adenosyl-L-methionine is bound by residues Gly-49, Trp-51, Asp-69, Asp-87, and Asp-111. The active-site Proton acceptor is the Lys-151.

Belongs to the class I-like SAM-binding methyltransferase superfamily. RNA methyltransferase RlmE family.

It localises to the cytoplasm. The enzyme catalyses uridine(2552) in 23S rRNA + S-adenosyl-L-methionine = 2'-O-methyluridine(2552) in 23S rRNA + S-adenosyl-L-homocysteine + H(+). In terms of biological role, specifically methylates the uridine in position 2552 of 23S rRNA at the 2'-O position of the ribose in the fully assembled 50S ribosomal subunit. In Nitratidesulfovibrio vulgaris (strain DSM 19637 / Miyazaki F) (Desulfovibrio vulgaris), this protein is Ribosomal RNA large subunit methyltransferase E.